The primary structure comprises 260 residues: Neuraminyllactose-binding hemagglutinin (260 aa).

Positions 1 to 27 (MKTNGHFKDFAWKKCFLGASVVALLVG) are cleaved as a signal peptide. Cys28 is lipidated: N-palmitoyl cysteine. Cys28 carries S-diacylglycerol cysteine lipidation.

The protein resides in the cell outer membrane. The chain is Neuraminyllactose-binding hemagglutinin (hpaA) from Helicobacter pylori (strain J99 / ATCC 700824) (Campylobacter pylori J99).